A 437-amino-acid chain; its full sequence is Glutamate-1-semialdehyde 2,1-aminomutase (437 aa).

K274 carries the post-translational modification N6-(pyridoxal phosphate)lysine.

It belongs to the class-III pyridoxal-phosphate-dependent aminotransferase family. HemL subfamily. Homodimer. Pyridoxal 5'-phosphate serves as cofactor.

It localises to the cytoplasm. The enzyme catalyses (S)-4-amino-5-oxopentanoate = 5-aminolevulinate. Its pathway is porphyrin-containing compound metabolism; protoporphyrin-IX biosynthesis; 5-aminolevulinate from L-glutamyl-tRNA(Glu): step 2/2. The protein is Glutamate-1-semialdehyde 2,1-aminomutase of Leptothrix cholodnii (strain ATCC 51168 / LMG 8142 / SP-6) (Leptothrix discophora (strain SP-6)).